We begin with the raw amino-acid sequence, 299 residues long: Coenzyme PQQ synthesis protein B (299 aa).

The protein belongs to the PqqB family.

It functions in the pathway cofactor biosynthesis; pyrroloquinoline quinone biosynthesis. Functionally, may be involved in the transport of PQQ or its precursor to the periplasm. The protein is Coenzyme PQQ synthesis protein B of Methylobacterium sp. (strain 4-46).